The chain runs to 113 residues: U11-theraphotoxin-Hhn1o (113 aa).

Residues 1–21 form the signal peptide; it reads MNTVRVTFLLVFVLAVSLGQA. Positions 22-74 are excised as a propeptide; the sequence is DKDENRMEMQEKTEQGKSYLDFAENLLLQKLEELEAKLLEEDSEESRNSRQKR. The disordered stretch occupies residues 61–83; sequence EEDSEESRNSRQKRCIGEGVPCD. Intrachain disulfides connect cysteine 75–cysteine 90 and cysteine 82–cysteine 95.

It belongs to the neurotoxin 14 (magi-1) family. 01 (HNTX-16) subfamily. Expressed by the venom gland.

It localises to the secreted. Probable ion channel inhibitor. This is U11-theraphotoxin-Hhn1o from Cyriopagopus hainanus (Chinese bird spider).